The following is a 950-amino-acid chain: Bifunctional glutamine synthetase adenylyltransferase/adenylyl-removing enzyme (950 aa).

Residues 1–443 form an adenylyl removase region; the sequence is MSLPSPLIPV…VFVTLIGDEE (443 aa). Residues 450-950 are adenylyl transferase; the sequence is ERHFNELWDM…WQEWLESSTI (501 aa).

Belongs to the GlnE family. Requires Mg(2+) as cofactor.

The enzyme catalyses [glutamine synthetase]-O(4)-(5'-adenylyl)-L-tyrosine + phosphate = [glutamine synthetase]-L-tyrosine + ADP. It carries out the reaction [glutamine synthetase]-L-tyrosine + ATP = [glutamine synthetase]-O(4)-(5'-adenylyl)-L-tyrosine + diphosphate. Functionally, involved in the regulation of glutamine synthetase GlnA, a key enzyme in the process to assimilate ammonia. When cellular nitrogen levels are high, the C-terminal adenylyl transferase (AT) inactivates GlnA by covalent transfer of an adenylyl group from ATP to specific tyrosine residue of GlnA, thus reducing its activity. Conversely, when nitrogen levels are low, the N-terminal adenylyl removase (AR) activates GlnA by removing the adenylyl group by phosphorolysis, increasing its activity. The regulatory region of GlnE binds the signal transduction protein PII (GlnB) which indicates the nitrogen status of the cell. This Vibrio vulnificus (strain CMCP6) protein is Bifunctional glutamine synthetase adenylyltransferase/adenylyl-removing enzyme.